The following is a 159-amino-acid chain: Large ribosomal subunit protein uL15 (159 aa).

A disordered region spans residues 1–46; sequence MKLNELSPSVPKKNRKRIGRGNSSGWGKTAGKGSNGQNSRAGGGVK. Gly residues predominate over residues 22 to 34; it reads NSSGWGKTAGKGS.

Belongs to the universal ribosomal protein uL15 family. Part of the 50S ribosomal subunit.

Its function is as follows. Binds to the 23S rRNA. This chain is Large ribosomal subunit protein uL15, found in Fusobacterium nucleatum subsp. nucleatum (strain ATCC 25586 / DSM 15643 / BCRC 10681 / CIP 101130 / JCM 8532 / KCTC 2640 / LMG 13131 / VPI 4355).